Consider the following 513-residue polypeptide: Flavonoid 3',5'-hydroxylase (513 aa).

Position 446 (cysteine 446) interacts with heme.

This sequence belongs to the cytochrome P450 family. Heme serves as cofactor. As to expression, hypocotyl tissues.

The enzyme catalyses a 3',5'-unsubstituted flavanone + 2 reduced [NADPH--hemoprotein reductase] + 2 O2 = a 3',5'-dihydroxyflavanone + 2 oxidized [NADPH--hemoprotein reductase] + 2 H2O + 2 H(+). It functions in the pathway pigment biosynthesis; anthocyanin biosynthesis. In terms of biological role, catalyzes the 3'5'-hydroxylation of naringenin and eriodictyol to form 5,7,3,'4',5'-pentahydroxyflavanone and 3',5'-hydroxylation of dihydrokaempferol and dihydroquercetin to form dihydromyricetin. In Solanum melongena (Eggplant), this protein is Flavonoid 3',5'-hydroxylase (CYP75A2).